Here is a 255-residue protein sequence, read N- to C-terminus: 1-(5-phosphoribosyl)-5-[(5-phosphoribosylamino)methylideneamino] imidazole-4-carboxamide isomerase (255 aa).

Asp8 serves as the catalytic Proton acceptor. Asp129 functions as the Proton donor in the catalytic mechanism.

The protein belongs to the HisA/HisF family.

It localises to the cytoplasm. It carries out the reaction 1-(5-phospho-beta-D-ribosyl)-5-[(5-phospho-beta-D-ribosylamino)methylideneamino]imidazole-4-carboxamide = 5-[(5-phospho-1-deoxy-D-ribulos-1-ylimino)methylamino]-1-(5-phospho-beta-D-ribosyl)imidazole-4-carboxamide. It functions in the pathway amino-acid biosynthesis; L-histidine biosynthesis; L-histidine from 5-phospho-alpha-D-ribose 1-diphosphate: step 4/9. This chain is 1-(5-phosphoribosyl)-5-[(5-phosphoribosylamino)methylideneamino] imidazole-4-carboxamide isomerase, found in Prochlorococcus marinus subsp. pastoris (strain CCMP1986 / NIES-2087 / MED4).